Here is a 445-residue protein sequence, read N- to C-terminus: Tubulin beta chain (445 aa).

Residues Q11, E69, S138, G142, T143, G144, N205, and N227 each coordinate GTP. Residue E69 participates in Mg(2+) binding.

It belongs to the tubulin family. In terms of assembly, dimer of alpha and beta chains. A typical microtubule is a hollow water-filled tube with an outer diameter of 25 nm and an inner diameter of 15 nM. Alpha-beta heterodimers associate head-to-tail to form protofilaments running lengthwise along the microtubule wall with the beta-tubulin subunit facing the microtubule plus end conferring a structural polarity. Microtubules usually have 13 protofilaments but different protofilament numbers can be found in some organisms and specialized cells. Mg(2+) is required as a cofactor.

The protein resides in the cytoplasm. Its subcellular location is the cytoskeleton. Its function is as follows. Tubulin is the major constituent of microtubules, a cylinder consisting of laterally associated linear protofilaments composed of alpha- and beta-tubulin heterodimers. Microtubules grow by the addition of GTP-tubulin dimers to the microtubule end, where a stabilizing cap forms. Below the cap, tubulin dimers are in GDP-bound state, owing to GTPase activity of alpha-tubulin. The polypeptide is Tubulin beta chain (TUB2) (Ajellomyces capsulatus (Darling's disease fungus)).